The chain runs to 408 residues: Tryptophan synthase beta chain (408 aa).

N6-(pyridoxal phosphate)lysine is present on Lys-97.

Belongs to the TrpB family. In terms of assembly, tetramer of two alpha and two beta chains. The cofactor is pyridoxal 5'-phosphate.

It carries out the reaction (1S,2R)-1-C-(indol-3-yl)glycerol 3-phosphate + L-serine = D-glyceraldehyde 3-phosphate + L-tryptophan + H2O. Its pathway is amino-acid biosynthesis; L-tryptophan biosynthesis; L-tryptophan from chorismate: step 5/5. The beta subunit is responsible for the synthesis of L-tryptophan from indole and L-serine. This chain is Tryptophan synthase beta chain (trpB), found in Pseudomonas syringae pv. syringae.